Reading from the N-terminus, the 309-residue chain is Homoserine O-succinyltransferase (309 aa).

Cysteine 142 functions as the Acyl-thioester intermediate in the catalytic mechanism. Lysine 163 and serine 192 together coordinate substrate. Residue histidine 235 is the Proton acceptor of the active site. The active site involves glutamate 237. A substrate-binding site is contributed by arginine 249.

It belongs to the MetA family.

It localises to the cytoplasm. It carries out the reaction L-homoserine + succinyl-CoA = O-succinyl-L-homoserine + CoA. The protein operates within amino-acid biosynthesis; L-methionine biosynthesis via de novo pathway; O-succinyl-L-homoserine from L-homoserine: step 1/1. Its function is as follows. Transfers a succinyl group from succinyl-CoA to L-homoserine, forming succinyl-L-homoserine. The protein is Homoserine O-succinyltransferase of Edwardsiella ictaluri (strain 93-146).